Consider the following 210-residue polypeptide: T-cell antigen CD7 (210 aa).

The first 23 residues, 1-23 (MTQQAVLALLLTLAGILPGPLDA), serve as a signal peptide directing secretion. The Ig-like domain maps to 24-129 (QDVHQSPRLT…RGLFTTVVVK (106 aa)). Residues 24 to 150 (QDVHQSPRLT…EPLQTSFSFP (127 aa)) lie on the Extracellular side of the membrane. 3 N-linked (GlcNAc...) asparagine glycosylation sites follow: Asn42, Asn86, and Asn93. A disulfide bridge links Cys45 with Cys111. A helical membrane pass occupies residues 151–171 (AAIAVGFFFTGLLLGVVCSML). Cys168 carries S-palmitoyl cysteine lipidation. The Cytoplasmic segment spans residues 172–210 (RKIQIKKLCASGIKESPCVVYEDMSYSNRKTPCIPNQYQ).

As to quaternary structure, interacts with SECTM1.

It is found in the membrane. Transmembrane glycoprotein expressed by T-cells and natural killer (NK) cells and their precursors. Plays a costimulatory role in T-cell activation upon binding to its ligand K12/SECTM1. In turn, mediates the production of cytokines such as IL-2. On resting NK-cells, CD7 activation results in a significant induction of gamma-interferon levels. The protein is T-cell antigen CD7 (Cd7) of Mus musculus (Mouse).